The primary structure comprises 216 residues: MNYPHPLIAREGWPFLAGAFVISLLVHASAGFWWALPLWIITVFVLQFFRDPPRPIPSAPNAVLAPADGRIVVVEKTMDPYANREALKISVFMNVFNVHSNRVSVDGAVEKVEYFPGKFVNADLDKASTENERNAVVIRRAADGQVVTLVQVAGLVARRILCYTKAGENLSRGQRYGFIRFGSRVDVYLPLDARPRVTIGEKVSASSTILAELDVK.

Residue S183 is the Schiff-base intermediate with substrate; via pyruvic acid of the active site. The residue at position 183 (S183) is a Pyruvic acid (Ser); by autocatalysis.

Belongs to the phosphatidylserine decarboxylase family. PSD-A subfamily. In terms of assembly, heterodimer of a large membrane-associated beta subunit and a small pyruvoyl-containing alpha subunit. Pyruvate is required as a cofactor. Post-translationally, is synthesized initially as an inactive proenzyme. Formation of the active enzyme involves a self-maturation process in which the active site pyruvoyl group is generated from an internal serine residue via an autocatalytic post-translational modification. Two non-identical subunits are generated from the proenzyme in this reaction, and the pyruvate is formed at the N-terminus of the alpha chain, which is derived from the carboxyl end of the proenzyme. The post-translation cleavage follows an unusual pathway, termed non-hydrolytic serinolysis, in which the side chain hydroxyl group of the serine supplies its oxygen atom to form the C-terminus of the beta chain, while the remainder of the serine residue undergoes an oxidative deamination to produce ammonia and the pyruvoyl prosthetic group on the alpha chain.

It localises to the cell membrane. It catalyses the reaction a 1,2-diacyl-sn-glycero-3-phospho-L-serine + H(+) = a 1,2-diacyl-sn-glycero-3-phosphoethanolamine + CO2. Its pathway is phospholipid metabolism; phosphatidylethanolamine biosynthesis; phosphatidylethanolamine from CDP-diacylglycerol: step 2/2. In terms of biological role, catalyzes the formation of phosphatidylethanolamine (PtdEtn) from phosphatidylserine (PtdSer). The sequence is that of Phosphatidylserine decarboxylase proenzyme from Cupriavidus taiwanensis (strain DSM 17343 / BCRC 17206 / CCUG 44338 / CIP 107171 / LMG 19424 / R1) (Ralstonia taiwanensis (strain LMG 19424)).